The sequence spans 264 residues: Thiazole synthase (264 aa).

Lysine 106 functions as the Schiff-base intermediate with DXP in the catalytic mechanism. Residues glycine 167, 193 to 194 (AG), and 215 to 216 (NT) each bind 1-deoxy-D-xylulose 5-phosphate.

This sequence belongs to the ThiG family. Homotetramer. Forms heterodimers with either ThiH or ThiS.

The protein resides in the cytoplasm. It carries out the reaction [ThiS sulfur-carrier protein]-C-terminal-Gly-aminoethanethioate + 2-iminoacetate + 1-deoxy-D-xylulose 5-phosphate = [ThiS sulfur-carrier protein]-C-terminal Gly-Gly + 2-[(2R,5Z)-2-carboxy-4-methylthiazol-5(2H)-ylidene]ethyl phosphate + 2 H2O + H(+). Its pathway is cofactor biosynthesis; thiamine diphosphate biosynthesis. In terms of biological role, catalyzes the rearrangement of 1-deoxy-D-xylulose 5-phosphate (DXP) to produce the thiazole phosphate moiety of thiamine. Sulfur is provided by the thiocarboxylate moiety of the carrier protein ThiS. In vitro, sulfur can be provided by H(2)S. This Xanthomonas oryzae pv. oryzae (strain MAFF 311018) protein is Thiazole synthase.